The primary structure comprises 551 residues: Arginine--tRNA ligase (551 aa).

A 'HIGH' region motif is present at residues 125 to 135 (ANPTGPLHIGH).

This sequence belongs to the class-I aminoacyl-tRNA synthetase family. In terms of assembly, monomer.

It localises to the cytoplasm. The catalysed reaction is tRNA(Arg) + L-arginine + ATP = L-arginyl-tRNA(Arg) + AMP + diphosphate. The protein is Arginine--tRNA ligase of Nitratidesulfovibrio vulgaris (strain DSM 19637 / Miyazaki F) (Desulfovibrio vulgaris).